The primary structure comprises 262 residues: Phosphatidylglycerol--prolipoprotein diacylglyceryl transferase (262 aa).

4 helical membrane passes run L9–V29, I41–A61, I80–V100, and L109–L129. R131 serves as a coordination point for a 1,2-diacyl-sn-glycero-3-phospho-(1'-sn-glycerol). Transmembrane regions (helical) follow at residues Q167–F187, G197–M217, and G226–I246.

This sequence belongs to the Lgt family.

Its subcellular location is the cell membrane. It carries out the reaction L-cysteinyl-[prolipoprotein] + a 1,2-diacyl-sn-glycero-3-phospho-(1'-sn-glycerol) = an S-1,2-diacyl-sn-glyceryl-L-cysteinyl-[prolipoprotein] + sn-glycerol 1-phosphate + H(+). The protein operates within protein modification; lipoprotein biosynthesis (diacylglyceryl transfer). In terms of biological role, catalyzes the transfer of the diacylglyceryl group from phosphatidylglycerol to the sulfhydryl group of the N-terminal cysteine of a prolipoprotein, the first step in the formation of mature lipoproteins. This is Phosphatidylglycerol--prolipoprotein diacylglyceryl transferase from Streptococcus pneumoniae (strain P1031).